The following is a 1454-amino-acid chain: ABC transporter G family member 43 (1454 aa).

Positions 23-47 (ARSLRDGDDPFRRSAAASRRDAGDD) are disordered. Positions 25–44 (SLRDGDDPFRRSAAASRRDA) are enriched in basic and acidic residues. Asparagine 163 is a glycosylation site (N-linked (GlcNAc...) asparagine). The ABC transporter 1 domain maps to 170 to 444 (EGLVSLFISS…FESAGFRCPE (275 aa)). 204–211 (GPPSSGKS) contributes to the ATP binding site. Asparagine 393 is a glycosylation site (N-linked (GlcNAc...) asparagine). Positions 524–735 (LKAVMSREWL…SNNALSVNEF (212 aa)) constitute an ABC transmembrane type-2 1 domain. Transmembrane regions (helical) follow at residues 540–560 (FLFI…MTLF), 577–597 (VGAL…ELQL), 613–630 (FFPA…KVPL), 637–656 (LWIV…GRFF), 659–679 (FLAY…LGAI), and 684–704 (VVAN…GGFL). A glycan (N-linked (GlcNAc...) asparagine) is linked at asparagine 745. A helical transmembrane segment spans residues 775–795 (IGAMIGFMIVFNILYLCALTF). Positions 804 to 823 (TVVSDDDTKSELEAESNQEQ) are disordered. Residues asparagine 829 and asparagine 832 are each glycosylated (N-linked (GlcNAc...) asparagine). The 253-residue stretch at 852-1104 (LSFNHMNYYV…ILVEYFEAIP (253 aa)) folds into the ABC transporter 2 domain. ATP is bound at residue 897–904 (GVSGAGKT). Asparagine 951 is a glycosylation site (N-linked (GlcNAc...) asparagine). One can recognise an ABC transmembrane type-2 2 domain in the interval 1178–1391 (QCVANTWKQF…TIYGVIASQF (214 aa)). The next 7 membrane-spanning stretches (helical) occupy residues 1196–1216 (YNAM…TVFW), 1236–1256 (YAAV…VVSV), 1284–1304 (FCYS…MIGY), 1314–1334 (FLFF…MLVA), 1341–1361 (LAAV…GFII), 1372–1392 (WFYW…SQFA), and 1423–1443 (FLGY…FLFG).

The protein belongs to the ABC transporter superfamily. ABCG family. PDR (TC 3.A.1.205) subfamily. In terms of tissue distribution, specifically expressed in the vasculature of roots, stems, panicles, sheaths and leaves.

The protein localises to the cell membrane. Its function is as follows. ABC transporter modulating cadmium (Cd) import, thus controlling Cd(2+) accumulation to prevent phytotoxicity. Confers high tolerance to Cd in yeast. Prevents leaf bacteria proliferation, such as Xanthomonas oryzae pv. oryzicola (Xoc) RS105 and X.oryzae pv. oryzae (Xoo) PXO99, by triggering Cd accumulation, which in turn impairs bacterial virulence factors. This is ABC transporter G family member 43 from Oryza sativa subsp. japonica (Rice).